Consider the following 209-residue polypeptide: Ribonuclease HII (209 aa).

An RNase H type-2 domain is found at 25-209 (RRIAGIDEAG…ATFRGVREYL (185 aa)). Residues Asp-31, Glu-32, and Asp-123 each coordinate a divalent metal cation.

This sequence belongs to the RNase HII family. The cofactor is Mn(2+). Mg(2+) serves as cofactor.

It is found in the cytoplasm. It catalyses the reaction Endonucleolytic cleavage to 5'-phosphomonoester.. Its function is as follows. Endonuclease that specifically degrades the RNA of RNA-DNA hybrids. The protein is Ribonuclease HII of Syntrophotalea carbinolica (strain DSM 2380 / NBRC 103641 / GraBd1) (Pelobacter carbinolicus).